The primary structure comprises 268 residues: Regulatory protein zeste (268 aa).

Residues 1-72 (TAEEKEVLYT…WLNSRLRKQY (72 aa)) mediate DNA binding. Positions 94–108 (VSVASAVPQQQQQQH) are enriched in low complexity. The tract at residues 94–133 (VSVASAVPQQQQQQHHQQHDNVKEEPEYQISPDASEHNPQ) is disordered. Residues 110-119 (QQHDNVKEEP) are compositionally biased toward basic and acidic residues.

Self-associates forming complexes of several hundred monomers.

Its subcellular location is the nucleus. Its function is as follows. Involved in transvection phenomena (= synapsis-dependent gene expression), where the synaptic pairing of chromosomes carrying genes with which zeste interacts influences the expression of these genes. Zeste binds to DNA and stimulates transcription from a nearby promoter. In Drosophila sechellia (Fruit fly), this protein is Regulatory protein zeste (z).